The sequence spans 227 residues: GFP-like non-fluorescent chromoprotein (227 aa).

The segment at residues 63–65 is a cross-link (2-iminomethyl-5-imidazolinone (Glu-Gly)); it reads EYG. Tyrosine 64 is modified (2,3-didehydrotyrosine).

This sequence belongs to the GFP family. In terms of assembly, homotetramer. Post-translationally, contains a chromophore consisting of modified amino acid residues. The chromophore is formed by autocatalytic backbone condensation between Xaa-N and Gly-(N+2), oxidation of Tyr-(N+1) to didehydrotyrosine, and formation of a double bond to the alpha-amino nitrogen of residue Xaa-N. Maturation of the chromophore requires nothing other than molecular oxygen. The precise stereochemistry of the tyrosine has not been determined.

In terms of biological role, non-fluorescent pigment protein that is lilac in color. The chain is GFP-like non-fluorescent chromoprotein from Radianthus crispa (Leathery sea anemone).